The primary structure comprises 306 residues: MVKILKTTLRATTMLKVLVKIRLSLFLTFSVLCLMPIMYMASHKTIPNEFLHNFGGKIPKSIKLETRSGLTFDVQVTKNSGRVVLQSGWASYVSAHDLKIGDFLVFKYSGDSQLKTLIFDSSGCEKVCEKPVDMSGRSYDIAMRNSQDEKKKRKQRDISRQGTVKPSEEGLKAELVPGCILPSRTDLTRLQKNILIEKVKAINSETPIYGYVMNNSSIHGIPCTVEISKKYADVYLPFEDGTVVLQHHGKSWNVRCCLTKQNSKRFLKGWRQFAGDNKLHLGDICLFDLLKDKKKYVMDVHIIRRK.

Residues 29–122 (FSVLCLMPIM…QLKTLIFDSS (94 aa)) constitute a DNA-binding region (TF-B3 1). Residues 139–166 (YDIAMRNSQDEKKKRKQRDISRQGTVKP) form a disordered region. A DNA-binding region (TF-B3 2) is located at residues 210–306 (GYVMNNSSIH…VMDVHIIRRK (97 aa)).

The protein resides in the nucleus. The sequence is that of Putative B3 domain-containing protein Os03g0621600 from Oryza sativa subsp. japonica (Rice).